A 379-amino-acid chain; its full sequence is Sialidase-2 (379 aa).

Positions 20–23 (YRIP) match the FRIP motif motif. Substrate-binding residues include Arg21 and Arg41. Catalysis depends on Asp46, which acts as the Proton acceptor. Residues 127-138 (ITSTDHGKTWSA) form a BNR 1 repeat. Tyr179 and Tyr181 together coordinate substrate. One copy of the BNR 2 repeat lies at 197–208 (FLSHDHGSTWEL). Substrate is bound by residues Glu218, Arg237, and Arg303. The active-site Nucleophile is Tyr333. The active site involves Glu354.

The protein belongs to the glycosyl hydrolase 33 family.

The protein resides in the cytoplasm. It carries out the reaction Hydrolysis of alpha-(2-&gt;3)-, alpha-(2-&gt;6)-, alpha-(2-&gt;8)- glycosidic linkages of terminal sialic acid residues in oligosaccharides, glycoproteins, glycolipids, colominic acid and synthetic substrates.. Its function is as follows. Catalyzes the removal of sialic acid (N-acetylneuraminic acid) moieties from glycoproteins, oligosaccharides and gangliosides. The chain is Sialidase-2 (NEU2) from Cricetulus griseus (Chinese hamster).